We begin with the raw amino-acid sequence, 515 residues long: RNA-splicing ligase RtcB homolog (515 aa).

Mn(2+)-binding residues include D121, C124, H229, H269, and H363. 228 to 232 (NHYGE) contributes to the GMP binding site. Residues 363 to 364 (HN), 412 to 415 (GGTM), S419, 438 to 441 (HGSG), and K514 each bind GMP. Residue H438 is the GMP-histidine intermediate of the active site.

Belongs to the RtcB family. As to quaternary structure, catalytic component of the tRNA-splicing ligase complex. The cofactor is Mn(2+).

It catalyses the reaction a 3'-end 3'-phospho-ribonucleotide-RNA + a 5'-end dephospho-ribonucleoside-RNA + GTP = a ribonucleotidyl-ribonucleotide-RNA + GMP + diphosphate. The enzyme catalyses a 3'-end 2',3'-cyclophospho-ribonucleotide-RNA + a 5'-end dephospho-ribonucleoside-RNA + GTP + H2O = a ribonucleotidyl-ribonucleotide-RNA + GMP + diphosphate + H(+). Catalytic subunit of the tRNA-splicing ligase complex that acts by directly joining spliced tRNA halves to mature-sized tRNAs by incorporating the precursor-derived splice junction phosphate into the mature tRNA as a canonical 3',5'-phosphodiester. May act as an RNA ligase with broad substrate specificity, and may function toward other RNAs. This is RNA-splicing ligase RtcB homolog from Theileria annulata.